Reading from the N-terminus, the 334-residue chain is Ketol-acid reductoisomerase (NADP(+)) (334 aa).

Residues 1-181 enclose the KARI N-terminal Rossmann domain; the sequence is MTTVYYDQDV…GATRAGVIET (181 aa). NADP(+)-binding positions include 25–28, R48, S52, and 82–85; these read YGSQ and DEIQ. H107 is a catalytic residue. G133 lines the NADP(+) pocket. The KARI C-terminal knotted domain occupies 182–327; that stretch reads TFKEETETDL…RELREMMPFI (146 aa). Mg(2+) is bound by residues D190, E194, E226, and E230. Residue S251 participates in substrate binding.

It belongs to the ketol-acid reductoisomerase family. The cofactor is Mg(2+).

The enzyme catalyses (2R)-2,3-dihydroxy-3-methylbutanoate + NADP(+) = (2S)-2-acetolactate + NADPH + H(+). The catalysed reaction is (2R,3R)-2,3-dihydroxy-3-methylpentanoate + NADP(+) = (S)-2-ethyl-2-hydroxy-3-oxobutanoate + NADPH + H(+). It functions in the pathway amino-acid biosynthesis; L-isoleucine biosynthesis; L-isoleucine from 2-oxobutanoate: step 2/4. The protein operates within amino-acid biosynthesis; L-valine biosynthesis; L-valine from pyruvate: step 2/4. Its function is as follows. Involved in the biosynthesis of branched-chain amino acids (BCAA). Catalyzes an alkyl-migration followed by a ketol-acid reduction of (S)-2-acetolactate (S2AL) to yield (R)-2,3-dihydroxy-isovalerate. In the isomerase reaction, S2AL is rearranged via a Mg-dependent methyl migration to produce 3-hydroxy-3-methyl-2-ketobutyrate (HMKB). In the reductase reaction, this 2-ketoacid undergoes a metal-dependent reduction by NADPH to yield (R)-2,3-dihydroxy-isovalerate. This is Ketol-acid reductoisomerase (NADP(+)) from Staphylococcus aureus (strain MSSA476).